Consider the following 495-residue polypeptide: UDP-glycosyltransferase 1 (495 aa).

His-24 serves as the catalytic Proton acceptor. His-24 provides a ligand contact to an anthocyanidin. Asp-129 (charge relay) is an active-site residue. UDP-alpha-D-glucose contacts are provided by Gln-358, His-373, Trp-376, Asn-377, Ser-378, and Glu-381. Residue Gly-396 participates in an anthocyanidin binding. Positions 397 and 398 each coordinate UDP-alpha-D-glucose.

Belongs to the UDP-glycosyltransferase family.

The enzyme catalyses oleanolate + UDP-alpha-D-glucose = oleanolate 3-O-beta-D-glucoside + UDP + H(+). Functionally, catalyzes the transfer of a glucose (Glc) moiety from UDP-Glc to the C-3 position of the oleanane sapogenins oleanolate and hederagenin. The monoglucosylated hederagenin 3-O-beta-D-glucoside is a feeding deterrent of the yellow-striped flea beetle (Phyllotreta nemorum). This is UDP-glycosyltransferase 1 from Barbarea vulgaris (Yellow rocket).